The chain runs to 408 residues: Probable pectate lyase 5 (408 aa).

The signal sequence occupies residues 1–27 (MRMTLVHLSLSLFSCLLLVLSPTFIAS). Asn45 carries N-linked (GlcNAc...) asparagine glycosylation. Asp206, Asp230, and Asp234 together coordinate Ca(2+). Arg286 is an active-site residue.

The protein belongs to the polysaccharide lyase 1 family. Ca(2+) serves as cofactor.

It carries out the reaction Eliminative cleavage of (1-&gt;4)-alpha-D-galacturonan to give oligosaccharides with 4-deoxy-alpha-D-galact-4-enuronosyl groups at their non-reducing ends.. Its pathway is glycan metabolism; pectin degradation; 2-dehydro-3-deoxy-D-gluconate from pectin: step 2/5. In Arabidopsis thaliana (Mouse-ear cress), this protein is Probable pectate lyase 5.